The sequence spans 647 residues: Threonine--tRNA ligase (647 aa).

The TGS domain occupies 1 to 61 (MINITFPDGA…TEDGSIEIVT (61 aa)). The catalytic stretch occupies residues 242–540 (DHRKLGKELD…LIENYKGAFP (299 aa)). The Zn(2+) site is built by Cys-336, His-387, and His-517.

It belongs to the class-II aminoacyl-tRNA synthetase family. In terms of assembly, homodimer. Zn(2+) is required as a cofactor.

The protein localises to the cytoplasm. The catalysed reaction is tRNA(Thr) + L-threonine + ATP = L-threonyl-tRNA(Thr) + AMP + diphosphate + H(+). Functionally, catalyzes the attachment of threonine to tRNA(Thr) in a two-step reaction: L-threonine is first activated by ATP to form Thr-AMP and then transferred to the acceptor end of tRNA(Thr). Also edits incorrectly charged L-seryl-tRNA(Thr). In Streptococcus pneumoniae (strain ATCC 700669 / Spain 23F-1), this protein is Threonine--tRNA ligase.